We begin with the raw amino-acid sequence, 264 residues long: Small ribosomal subunit protein eS1B (264 aa).

The segment covering methionine 1–glycine 19 has biased composition (basic residues). Residues methionine 1 to glutamate 23 are disordered.

It belongs to the eukaryotic ribosomal protein eS1 family. As to quaternary structure, component of the small ribosomal subunit. Mature ribosomes consist of a small (40S) and a large (60S) subunit. The 40S subunit contains about 33 different proteins and 1 molecule of RNA (18S). The 60S subunit contains about 49 different proteins and 3 molecules of RNA (25S, 5.8S and 5S).

It localises to the cytoplasm. The protein is Small ribosomal subunit protein eS1B of Leishmania infantum.